The sequence spans 136 residues: Protein NrdI (136 aa).

Belongs to the NrdI family.

Functionally, probably involved in ribonucleotide reductase function. This Klebsiella pneumoniae (strain 342) protein is Protein NrdI.